The sequence spans 341 residues: tRNA N6-adenosine threonylcarbamoyltransferase (341 aa).

The Fe cation site is built by H112 and H116. Residues T138–G142, D171, G184, D188, and N279 each bind substrate. Residue D307 coordinates Fe cation.

It belongs to the KAE1 / TsaD family. Fe(2+) serves as cofactor.

The protein resides in the cytoplasm. It carries out the reaction L-threonylcarbamoyladenylate + adenosine(37) in tRNA = N(6)-L-threonylcarbamoyladenosine(37) in tRNA + AMP + H(+). Functionally, required for the formation of a threonylcarbamoyl group on adenosine at position 37 (t(6)A37) in tRNAs that read codons beginning with adenine. Is involved in the transfer of the threonylcarbamoyl moiety of threonylcarbamoyl-AMP (TC-AMP) to the N6 group of A37, together with TsaE and TsaB. TsaD likely plays a direct catalytic role in this reaction. The chain is tRNA N6-adenosine threonylcarbamoyltransferase from Riemerella anatipestifer (Moraxella anatipestifer).